We begin with the raw amino-acid sequence, 621 residues long: ATP-dependent lipid A-core flippase (621 aa).

A run of 5 helical transmembrane segments spans residues 32 to 52, 91 to 111, 192 to 212, 286 to 306, and 312 to 332; these read IVAALIAIFGVAATESYLAAF, VWGTENKIWTVPLFLIILVVI, IVLLYLNWQLSLIVVLMFPLL, SPFSELIASIALAVVIFIALW, and YTTIGEFMAFIVAMLQMYAPI. In terms of domain architecture, ABC transmembrane type-1 spans 33–344; that stretch reads VAALIAIFGV…LANISIPMQT (312 aa). Positions 378–611 constitute an ABC transporter domain; that stretch reads FRNVDVEYRS…NGYYTMLRNI (234 aa). 410–417 contributes to the ATP binding site; sequence GRSGSGKS.

This sequence belongs to the ABC transporter superfamily. Lipid exporter (TC 3.A.1.106) family. As to quaternary structure, homodimer.

It localises to the cell inner membrane. It carries out the reaction ATP + H2O + lipid A-core oligosaccharideSide 1 = ADP + phosphate + lipid A-core oligosaccharideSide 2.. Functionally, involved in lipopolysaccharide (LPS) biosynthesis. Translocates lipid A-core from the inner to the outer leaflet of the inner membrane. Transmembrane domains (TMD) form a pore in the inner membrane and the ATP-binding domain (NBD) is responsible for energy generation. The chain is ATP-dependent lipid A-core flippase from Neisseria meningitidis serogroup B (strain ATCC BAA-335 / MC58).